The primary structure comprises 420 residues: UDP-N-acetylmuramoylalanine--D-glutamate ligase (420 aa).

Residue 109-115 coordinates ATP; sequence GSVGKST.

It belongs to the MurCDEF family.

The protein resides in the cytoplasm. It catalyses the reaction UDP-N-acetyl-alpha-D-muramoyl-L-alanine + D-glutamate + ATP = UDP-N-acetyl-alpha-D-muramoyl-L-alanyl-D-glutamate + ADP + phosphate + H(+). The protein operates within cell wall biogenesis; peptidoglycan biosynthesis. In terms of biological role, cell wall formation. Catalyzes the addition of glutamate to the nucleotide precursor UDP-N-acetylmuramoyl-L-alanine (UMA). The protein is UDP-N-acetylmuramoylalanine--D-glutamate ligase of Fervidobacterium nodosum (strain ATCC 35602 / DSM 5306 / Rt17-B1).